Consider the following 938-residue polypeptide: MSDYKSTLNLPETGFPMRGDLAKREPGMLARWTDDDLYGIIRAAKKGKKTFILHDGPPYANGSIHIGHSVNKILKDIIVKSKGLAGYDSPYVPGWDCHGLPIELKVEQEFGKPGEKFTAAEFRAKCREYAATQVDGQRKDFIRLGVLGDWSHPYLTMDFNTEANIIRALGKIIGNGHLHKGAKPVHWCVDCRSALAEAEVEYYDKTSPSIDVAFNAVDAAAVAAKFGAQNVNGPVSLVIWTTTPWTLPANRAISLHAEIDYVLVQIEGQALIVAKDLLESVMKRINVADYTVLGETKGAQLELMRFTHPFMGFDVPAILGEHVTLDAGTGAVHTAGGHGPDDYTISQKYGLEIANPVGPDGTYLPGTYPGLDGVNVFKANDQIVELLREKGALLNVAKLLHSYPCCWRHKTPIIFRATPQWFVSMDQKGLRAQSLKEIKGVQWIPDWGQARIESMVANRPDWCISRQRTWGVPMSLFVHKETQELHPRTLELMEEVAKRVEQDGIQAWWDLDPRDIMGDDADVYEKVPDTLDVWFDSGSTHSSVVDVRPEFAGHAADMYLEGSDQHRGWFMSSLMISTAMKGKAPYRQVLTHGFTVDGQGRKMSKSIGNTVSPQDVMNKLGADILRLWVASTDYTGEMAVSDEILKRAADAYRRIRNTARFLLANLNGFDPAKDMVKPEEMVVLDRWAVGCAKAAQDDIVKAYEAYDFHEVVQRLMRFCSIEMGSFYLDIIKDRQYTAKADSVARRSCQTALYHISEALVRWIAPILSFTADEVWGYLPGEREKYVFTGEWYDGLFGLADTEAMNDAYWDALLKVRGEVNKVIEQARADKKVGGSLEAAVTLYAEPELAAKLTALGEELRFVLLTSQAKVEDYASAAADAQQSELLKGLKVALAKAEGEKCPRCWHYTTDIGKVAEHAEICGRCVSNVAGDGEKRKFA.

Positions 58 to 68 (PYANGSIHIGH) match the 'HIGH' region motif. E561 is a binding site for L-isoleucyl-5'-AMP. The 'KMSKS' region signature appears at 602–606 (KMSKS). Residue K605 coordinates ATP. Residues C901, C904, C921, and C924 each contribute to the Zn(2+) site.

Belongs to the class-I aminoacyl-tRNA synthetase family. IleS type 1 subfamily. As to quaternary structure, monomer. Requires Zn(2+) as cofactor.

It localises to the cytoplasm. It catalyses the reaction tRNA(Ile) + L-isoleucine + ATP = L-isoleucyl-tRNA(Ile) + AMP + diphosphate. Functionally, catalyzes the attachment of isoleucine to tRNA(Ile). As IleRS can inadvertently accommodate and process structurally similar amino acids such as valine, to avoid such errors it has two additional distinct tRNA(Ile)-dependent editing activities. One activity is designated as 'pretransfer' editing and involves the hydrolysis of activated Val-AMP. The other activity is designated 'posttransfer' editing and involves deacylation of mischarged Val-tRNA(Ile). This chain is Isoleucine--tRNA ligase, found in Cronobacter sakazakii (strain ATCC BAA-894) (Enterobacter sakazakii).